Consider the following 198-residue polypeptide: Transcriptional regulator GfcR (198 aa).

Belongs to the purine/pyrimidine phosphoribosyltransferase family. GfcR subfamily.

This Methanosphaera stadtmanae (strain ATCC 43021 / DSM 3091 / JCM 11832 / MCB-3) protein is Transcriptional regulator GfcR.